Here is a 329-residue protein sequence, read N- to C-terminus: Phenylalanine--tRNA ligase alpha subunit (329 aa).

Glu-253 lines the Mg(2+) pocket.

Belongs to the class-II aminoacyl-tRNA synthetase family. Phe-tRNA synthetase alpha subunit type 1 subfamily. In terms of assembly, tetramer of two alpha and two beta subunits. Mg(2+) is required as a cofactor.

Its subcellular location is the cytoplasm. The enzyme catalyses tRNA(Phe) + L-phenylalanine + ATP = L-phenylalanyl-tRNA(Phe) + AMP + diphosphate + H(+). This is Phenylalanine--tRNA ligase alpha subunit from Teredinibacter turnerae (strain ATCC 39867 / T7901).